The sequence spans 183 residues: Adenine phosphoribosyltransferase (183 aa).

This sequence belongs to the purine/pyrimidine phosphoribosyltransferase family. Homodimer.

It localises to the cytoplasm. It carries out the reaction AMP + diphosphate = 5-phospho-alpha-D-ribose 1-diphosphate + adenine. Its pathway is purine metabolism; AMP biosynthesis via salvage pathway; AMP from adenine: step 1/1. In terms of biological role, catalyzes a salvage reaction resulting in the formation of AMP, that is energically less costly than de novo synthesis. The protein is Adenine phosphoribosyltransferase of Salmonella typhi.